A 130-amino-acid polypeptide reads, in one-letter code: Small ribosomal subunit protein uS9 (130 aa).

It belongs to the universal ribosomal protein uS9 family.

In Carboxydothermus hydrogenoformans (strain ATCC BAA-161 / DSM 6008 / Z-2901), this protein is Small ribosomal subunit protein uS9.